A 1306-amino-acid polypeptide reads, in one-letter code: Angiotensin-converting enzyme (1306 aa).

The signal sequence occupies residues 1–29; that stretch reads MGAASGRRGPGLLLPLPLLLLLPPQPALA. Residues 30–1256 are Extracellular-facing; the sequence is LDPGLQPGNF…GLDLDAQQAR (1227 aa). 9 N-linked (GlcNAc...) asparagine glycosylation sites follow: N38, N54, N74, E103, N111, I121, Y140, N146, and N160. 2 consecutive Peptidase M2 domains span residues 40–624 and 643–1222; these read SADE…LGWP and VTDE…LGWP. A disulfide bond links C157 and C165. Y231 is a chloride binding site. N-linked (GlcNAc...) asparagine glycans are attached at residues N318 and N368. C359 and C377 form a disulfide bridge. Residue H390 coordinates Zn(2+). Residue E391 is the Proton acceptor 1 of the active site. Zn(2+) contacts are provided by H394, P414, E418, and R442. N-linked (GlcNAc...) asparagine glycans are attached at residues N445 and N509. The active-site Proton donor 1 is H520. R529 is a chloride binding site. C545 and C557 form a disulfide bridge. N617 and N677 each carry an N-linked (GlcNAc...) asparagine glycan. 2 N-linked (GlcNAc...) (complex) asparagine glycosylation sites follow: N695 and N714. C757 and C763 are joined by a disulfide. An N-linked (GlcNAc...) asparagine; partial glycan is attached at N760. Residues R791 and Y829 each contribute to the chloride site. The N-linked (GlcNAc...) asparagine; partial glycan is linked to N942. Residues C957 and C975 are joined by a disulfide bond. H988 lines the Zn(2+) pocket. E989 serves as the catalytic Proton acceptor 2. H992 and E1016 together coordinate Zn(2+). Residues W1090 and R1094 each contribute to the chloride site. H1118 serves as the catalytic Proton donor 2. R1127 contacts chloride. A disulfide bridge links C1143 with C1155. Residue N1191 is glycosylated (N-linked (GlcNAc...) asparagine; partial). Residues 1215 to 1256 are juxtamembrane stalk; the sequence is HGEKLGWPQYNWTPNSARSEGPLPDSGRVSFLGLDLDAQQAR. Residues 1257 to 1277 form a helical membrane-spanning segment; that stretch reads VGQWLLLFLGIALLVATLGLS. Residues 1278–1306 are Cytoplasmic-facing; that stretch reads QRLFSIRHRSLHRHSHGPQFGSEVELRHS. Residue S1299 is modified to Phosphoserine.

This sequence belongs to the peptidase M2 family. Monomer and homodimer; homodimerizes following binding to an inhibitor. Interacts with calmodulin (CALM1, CALM2 or CALM3); interaction takes place in the cytoplasmic region and regulates phosphorylation and proteolytic cleavage. Zn(2+) is required as a cofactor. It depends on chloride as a cofactor. In terms of processing, produced following proteolytic cleavage by secretase enzymes that cleave the transmembrane form in the juxtamembrane stalk region upstream of the transmembrane region. Cleavage can take place at different sites of the juxtamembrane stalk region. Phosphorylated by CK2 on Ser-1299; which allows membrane retention. Phosphorylated on tyrosine residues on its extracellular part, promoting cleavage by secretase enzymes and formation of the soluble form (Angiotensin-converting enzyme, soluble form). As to expression, ubiquitously expressed, with highest levels in lung, kidney, heart, gastrointestinal system and prostate. In terms of tissue distribution, specifically expressed in spermatocytes and adult testis.

The protein resides in the cell membrane. It localises to the cytoplasm. Its subcellular location is the secreted. It catalyses the reaction Release of a C-terminal dipeptide, oligopeptide-|-Xaa-Yaa, when Xaa is not Pro, and Yaa is neither Asp nor Glu. Thus, conversion of angiotensin I to angiotensin II, with increase in vasoconstrictor activity, but no action on angiotensin II.. It carries out the reaction angiotensin I + H2O = L-histidyl-L-leucine + angiotensin II. The enzyme catalyses bradykinin + H2O = L-Phe-L-Arg + bradykinin(1-7). The catalysed reaction is substance P + H2O = substance P(1-9) + L-Leu-L-Met-NH2. It catalyses the reaction substance P + H2O = substance P(1-8) + Gly-L-Leu-L-Met-NH2. It carries out the reaction substance P + H2O = L-Phe-L-Phe-Gly-L-Leu-L-Met-NH2 + substance P(1-6). The enzyme catalyses neurotensin + H2O = neurotensin(1-11) + L-isoleucyl-L-leucine. The catalysed reaction is goralatide + H2O = N-acetyl-L-seryl-L-aspartate + L-lysyl-L-proline. It catalyses the reaction Met-enkephalin + H2O = L-phenylalanyl-L-methionine + L-tyrosylglycylglycine. It carries out the reaction Leu-enkephalin + H2O = L-tyrosylglycylglycine + L-phenylalanyl-L-leucine. The enzyme catalyses Met-enkephalin-Arg-Phe + H2O = L-arginyl-L-phenylalanine + Met-enkephalin. With respect to regulation, the dipeptidyl carboxypeptidase activity is strongly activated by chloride. The dipeptidyl carboxypeptidase activity is specifically inhibited by lisinopril, captopril and enalaprilat. Strongly inhibited by lisinopril and captopril. Its function is as follows. Dipeptidyl carboxypeptidase that removes dipeptides from the C-terminus of a variety of circulating hormones, such as angiotensin I, bradykinin or enkephalins, thereby playing a key role in the regulation of blood pressure, electrolyte homeostasis or synaptic plasticity. Composed of two similar catalytic domains, each possessing a functional active site, with different selectivity for substrates. Plays a major role in the angiotensin-renin system that regulates blood pressure and sodium retention by the kidney by converting angiotensin I to angiotensin II, resulting in an increase of the vasoconstrictor activity of angiotensin. Also able to inactivate bradykinin, a potent vasodilator, and therefore enhance the blood pressure response. Acts as a regulator of synaptic transmission by mediating cleavage of neuropeptide hormones, such as substance P, neurotensin or enkephalins. Catalyzes degradation of different enkephalin neuropeptides (Met-enkephalin, Leu-enkephalin, Met-enkephalin-Arg-Phe and possibly Met-enkephalin-Arg-Gly-Leu). Acts as a regulator of synaptic plasticity in the nucleus accumbens of the brain by mediating cleavage of Met-enkephalin-Arg-Phe, a strong ligand of Mu-type opioid receptor OPRM1, into Met-enkephalin. Met-enkephalin-Arg-Phe cleavage by ACE decreases activation of OPRM1, leading to long-term synaptic potentiation of glutamate release. Also acts as a regulator of hematopoietic stem cell differentiation by mediating degradation of hemoregulatory peptide N-acetyl-SDKP (AcSDKP). Acts as a regulator of cannabinoid signaling pathway by mediating degradation of hemopressin, an antagonist peptide of the cannabinoid receptor CNR1. Involved in amyloid-beta metabolism by catalyzing degradation of Amyloid-beta protein 40 and Amyloid-beta protein 42 peptides, thereby preventing plaque formation. Catalyzes cleavage of cholecystokinin (maturation of Cholecystokinin-8 and Cholecystokinin-5) and Gonadoliberin-1 (both maturation and degradation) hormones. Degradation of hemoregulatory peptide N-acetyl-SDKP (AcSDKP) and amyloid-beta proteins is mediated by the N-terminal catalytic domain, while angiotensin I and cholecystokinin cleavage is mediated by the C-terminal catalytic region. Soluble form that is released in blood plasma and other body fluids following proteolytic cleavage in the juxtamembrane stalk region. Functionally, isoform produced by alternative promoter usage that is specifically expressed in spermatocytes and adult testis, and which is required for male fertility. In contrast to somatic isoforms, only contains one catalytic domain. Acts as a dipeptidyl carboxypeptidase that removes dipeptides from the C-terminus of substrates. The identity of substrates that are needed for male fertility is unknown. May also have a glycosidase activity which releases GPI-anchored proteins from the membrane by cleaving the mannose linkage in the GPI moiety. The GPIase activity was reported to be essential for the egg-binding ability of the sperm. This activity is however unclear and has been challenged by other groups, suggesting that it may be indirect. In Homo sapiens (Human), this protein is Angiotensin-converting enzyme.